The primary structure comprises 153 residues: Endoribonuclease YbeY (153 aa).

Zn(2+) contacts are provided by His114, His118, and His124.

Belongs to the endoribonuclease YbeY family. Requires Zn(2+) as cofactor.

The protein resides in the cytoplasm. In terms of biological role, single strand-specific metallo-endoribonuclease involved in late-stage 70S ribosome quality control and in maturation of the 3' terminus of the 16S rRNA. The sequence is that of Endoribonuclease YbeY from Shewanella oneidensis (strain ATCC 700550 / JCM 31522 / CIP 106686 / LMG 19005 / NCIMB 14063 / MR-1).